Reading from the N-terminus, the 225-residue chain is MDVVFALGGSVLMPKEGASTENIQNYAKAFKKLKEMGHRVSVVVGGGNTARQYISVAREFTNESFCDEIGILATRMNSMLLISALGKDAVKQVPENFKDAELILNMDKILVMGGTHPAHTTDAVSATLAEFIDADLLVIATNVDGVYTKDPRCNEDAVKLDKINTKELLEITGSSSMSAGSSGVVDPLASKIIDRAELKTIVVKGIPEEILASVSGDHNGTTITP.

9 to 10 (GS) serves as a coordination point for ATP. Residue Gly-46 coordinates UMP. 2 residues coordinate ATP: Gly-47 and Arg-51. Residues Asp-67 and 115–121 (THPAHTT) each bind UMP. Thr-141, Asn-142, Tyr-147, and Asp-150 together coordinate ATP.

The protein belongs to the UMP kinase family. Homohexamer.

The protein localises to the cytoplasm. The catalysed reaction is UMP + ATP = UDP + ADP. It functions in the pathway pyrimidine metabolism; CTP biosynthesis via de novo pathway; UDP from UMP (UMPK route): step 1/1. With respect to regulation, inhibited by UTP. In terms of biological role, catalyzes the reversible phosphorylation of UMP to UDP. In Methanococcus maripaludis (strain C5 / ATCC BAA-1333), this protein is Uridylate kinase.